The primary structure comprises 247 residues: MPGRSSSNSGSTGFISFSGVESALSSLKNFQACINSGMDTASSVALDLVESQTEVSSEYSMDKAMVEFATLDRQLNHYVKAVQSTINHVKEERPEKIPDLKLLVEKKFLALQSKNSDADFQNNEKFVQFKQQLKELKKQCGLQADREADGTEGVDEDIIVTQSQTNFTCPITKEEMKKPVKNKVCGHTYEEDAIVRMIESRQKRKKKAYCPQIGCSHTDIRKSDLIQDEALRRAIENHNKKRHRHSE.

An N-acetylmethionine modification is found at Met1. Glycyl lysine isopeptide (Lys-Gly) (interchain with G-Cter in SUMO2) cross-links involve residues Lys90 and Lys107. Ser116 is modified (phosphoserine). Glycyl lysine isopeptide (Lys-Gly) (interchain with G-Cter in SUMO2) cross-links involve residues Lys125 and Lys130. The segment at 154 to 240 adopts an SP-RING-type zinc-finger fold; it reads VDEDIIVTQS…LRRAIENHNK (87 aa). 4 residues coordinate Zn(2+): Cys185, His187, Cys210, and Cys215.

Belongs to the NSE2 family. In terms of assembly, component of the SMC5-SMC6 complex which consists at least of SMC5, SMC6, NSMCE2, NSMCE1, NSMCE4A or EID3 and NSMCE3. Post-translationally, sumoylated, possibly via autosumoylation.

Its subcellular location is the nucleus. The protein resides in the chromosome. The protein localises to the telomere. It localises to the PML body. It participates in protein modification; protein sumoylation. Functionally, E3 SUMO-protein ligase component of the SMC5-SMC6 complex, a complex involved in DNA double-strand break repair by homologous recombination. Is not be required for the stability of the complex. The complex may promote sister chromatid homologous recombination by recruiting the SMC1-SMC3 cohesin complex to double-strand breaks. The complex is required for telomere maintenance via recombination in ALT (alternative lengthening of telomeres) cell lines and mediates sumoylation of shelterin complex (telosome) components which is proposed to lead to shelterin complex disassembly in ALT-associated PML bodies (APBs). Acts as an E3 ligase mediating SUMO attachment to various proteins such as SMC6L1 and TSNAX, the shelterin complex subunits TERF1, TERF2, TINF2 and TERF2IP, RAD51AP1, and maybe the cohesin components RAD21 and STAG2. Required for recruitment of telomeres to PML nuclear bodies. SUMO protein-ligase activity is required for the prevention of DNA damage-induced apoptosis by facilitating DNA repair, and for formation of APBs in ALT cell lines. Required for sister chromatid cohesion during prometaphase and mitotic progression. The protein is E3 SUMO-protein ligase NSE2 (NSMCE2) of Homo sapiens (Human).